The sequence spans 279 residues: Undecaprenyl-diphosphatase (279 aa).

8 consecutive transmembrane segments (helical) span residues 2-22 (LFIE…TEWL), 44-64 (AFME…VIVI), 85-105 (WQLW…AVPL), 113-133 (FNHM…FLWI), 163-183 (VLSI…AIIL), 188-208 (TVAA…YSGL), 225-245 (LLVL…VIKL), and 255-275 (FTVF…YSVF).

It belongs to the UppP family.

The protein resides in the cell membrane. The catalysed reaction is di-trans,octa-cis-undecaprenyl diphosphate + H2O = di-trans,octa-cis-undecaprenyl phosphate + phosphate + H(+). In terms of biological role, catalyzes the dephosphorylation of undecaprenyl diphosphate (UPP). Confers resistance to bacitracin. In Streptococcus equi subsp. zooepidemicus (strain MGCS10565), this protein is Undecaprenyl-diphosphatase.